We begin with the raw amino-acid sequence, 266 residues long: Transmembrane protein 192 (266 aa).

The Cytoplasmic segment spans residues Met1–Pro46. The residue at position 17 (Ser17) is a Phosphoserine. The chain crosses the membrane as a helical span at residues Thr47–Leu67. At Thr68–Pro89 the chain is on the lumenal side. Residues Leu90 to Phe110 traverse the membrane as a helical segment. Residues Glu111–Lys137 lie on the Cytoplasmic side of the membrane. The chain crosses the membrane as a helical span at residues Thr138–Gln158. The Lumenal portion of the chain corresponds to His159–Leu171. Residues Ile172–Val192 traverse the membrane as a helical segment. Residues Lys193–Thr266 are Cytoplasmic-facing. Tyr213 bears the Phosphotyrosine mark. Phosphoserine occurs at positions 229 and 230.

The protein belongs to the TMEM192 family. As to quaternary structure, homodimer.

It localises to the lysosome membrane. The protein localises to the late endosome. The protein is Transmembrane protein 192 (Tmem192) of Mus musculus (Mouse).